A 91-amino-acid chain; its full sequence is Insertion element IS1 7 protein InsA (91 aa).

The protein belongs to the IS1 elements InsA family.

Its function is as follows. Absolutely required for transposition of IS1. The polypeptide is Insertion element IS1 7 protein InsA (insA7) (Escherichia coli (strain K12)).